The primary structure comprises 262 residues: Small ribosomal subunit protein uS2 (262 aa).

Residues 236 to 262 are disordered; the sequence is AGGAAEAPAAEDVQTEEAAAPEADSAE.

This sequence belongs to the universal ribosomal protein uS2 family.

This chain is Small ribosomal subunit protein uS2, found in Psychrobacter sp. (strain PRwf-1).